A 1141-amino-acid chain; its full sequence is DNA-directed RNA polymerase subunit beta (1141 aa).

Belongs to the RNA polymerase beta chain family. As to quaternary structure, the RNAP catalytic core consists of 2 alpha, 1 beta, 1 beta' and 1 omega subunit. When a sigma factor is associated with the core the holoenzyme is formed, which can initiate transcription.

The enzyme catalyses RNA(n) + a ribonucleoside 5'-triphosphate = RNA(n+1) + diphosphate. Its function is as follows. DNA-dependent RNA polymerase catalyzes the transcription of DNA into RNA using the four ribonucleoside triphosphates as substrates. This is DNA-directed RNA polymerase subunit beta from Frankia casuarinae (strain DSM 45818 / CECT 9043 / HFP020203 / CcI3).